Here is a 338-residue protein sequence, read N- to C-terminus: MIVVLKPGSTEEDIRKVVKLAESYNLKCHISKGQERTVIGIIGDDRYVVADKFESLDCVESVVRVLKPYKLVSREFHPEDTVIDLGDVKIGNGYFTIIAGPCSVEGREMLMETAHFLSELGVKVLRGGAYKPRTSPYSFQGLGEKGLEYLREAADKYGMYVVTEALGEDDLPKVAEYADIIQIGARNAQNFRLLSKAGSYNKPVLLKRGFMNTIEEFLLSAEYIANSGNTKIILCERGIRTFEKATRNTLDISAVPIIRKESHLPILVDPSHSGGRRDLVIPLSRAAIAVGAHGIIVEVHPEPEKALSDGKQSLDFELFKELVQEMKKLADALGVKVN.

It belongs to the class-I DAHP synthase family. In terms of assembly, homotetramer. A divalent metal cation serves as cofactor.

The enzyme catalyses D-erythrose 4-phosphate + phosphoenolpyruvate + H2O = 7-phospho-2-dehydro-3-deoxy-D-arabino-heptonate + phosphate. Its pathway is metabolic intermediate biosynthesis; chorismate biosynthesis; chorismate from D-erythrose 4-phosphate and phosphoenolpyruvate: step 1/7. With respect to regulation, inhibited by L-phenylalanine and L-tyrosine. In terms of biological role, catalyzes the condensation of phosphoenolpyruvate (PEP) and D-erythrose-4-phosphate (E4P) giving rise to 3-deoxy-D-arabino-heptulosonate-7-phosphate (DAHP). This chain is Phospho-2-dehydro-3-deoxyheptonate aldolase (aroF), found in Thermotoga maritima (strain ATCC 43589 / DSM 3109 / JCM 10099 / NBRC 100826 / MSB8).